Reading from the N-terminus, the 295-residue chain is MKQDAGLGFRLWVESVVSRVLPGADVSEVLLPDTATKIYVFCVDGRVLFNLSDLVDILKCFGVCADSSQICEYMRSTGRVERLEQLKDLFGEEGLEVVCSSVFSDKLLQEIGSSIRSAKGPECFKDAGPELSHPRFSIGEYKFGCQREGRDGFHNVNELYPFNHQWTDSIMDGILKNIYTSDGKRMEDGCTGKERPAFIKAGSRGRHMKHSGSLKDRPFVCTYNDCKRAFKRYEHLKRHNLMHTGERPHKCRFPGCSKAFSRSDNLSQHYKVHSTTNEMHTRSYGSYRYLNKEFN.

C2H2-type zinc fingers lie at residues 219 to 243 (FVCT…NLMH) and 249 to 273 (HKCR…YKVH).

In Encephalitozoon cuniculi (strain GB-M1) (Microsporidian parasite), this protein is Zinc finger C2H2 protein ECU08_0560.